Reading from the N-terminus, the 329-residue chain is Ketol-acid reductoisomerase (NADP(+)) (329 aa).

The region spanning 2–182 is the KARI N-terminal Rossmann domain; the sequence is TQLFYDTDAD…GGTRAGILET (181 aa). NADP(+) contacts are provided by residues 25–28, Ser51, Ser53, and 83–86; these read YGSQ and DEFQ. His108 is a catalytic residue. Gly134 contributes to the NADP(+) binding site. The region spanning 183–328 is the KARI C-terminal knotted domain; that stretch reads NFKEETETDL…KGLRSMFSWL (146 aa). 4 residues coordinate Mg(2+): Asp191, Glu195, Glu227, and Glu231. Residue Ser252 coordinates substrate.

Belongs to the ketol-acid reductoisomerase family. It depends on Mg(2+) as a cofactor.

It carries out the reaction (2R)-2,3-dihydroxy-3-methylbutanoate + NADP(+) = (2S)-2-acetolactate + NADPH + H(+). The catalysed reaction is (2R,3R)-2,3-dihydroxy-3-methylpentanoate + NADP(+) = (S)-2-ethyl-2-hydroxy-3-oxobutanoate + NADPH + H(+). The protein operates within amino-acid biosynthesis; L-isoleucine biosynthesis; L-isoleucine from 2-oxobutanoate: step 2/4. It participates in amino-acid biosynthesis; L-valine biosynthesis; L-valine from pyruvate: step 2/4. Involved in the biosynthesis of branched-chain amino acids (BCAA). Catalyzes an alkyl-migration followed by a ketol-acid reduction of (S)-2-acetolactate (S2AL) to yield (R)-2,3-dihydroxy-isovalerate. In the isomerase reaction, S2AL is rearranged via a Mg-dependent methyl migration to produce 3-hydroxy-3-methyl-2-ketobutyrate (HMKB). In the reductase reaction, this 2-ketoacid undergoes a metal-dependent reduction by NADPH to yield (R)-2,3-dihydroxy-isovalerate. The chain is Ketol-acid reductoisomerase (NADP(+)) from Prochlorococcus marinus (strain MIT 9312).